A 387-amino-acid chain; its full sequence is 3-ketoacyl-CoA thiolase (387 aa).

Cys91 serves as the catalytic Acyl-thioester intermediate. Residues His343 and Cys373 each act as proton acceptor in the active site.

The protein belongs to the thiolase-like superfamily. Thiolase family. As to quaternary structure, heterotetramer of two alpha chains (FadB) and two beta chains (FadA).

The protein localises to the cytoplasm. The enzyme catalyses an acyl-CoA + acetyl-CoA = a 3-oxoacyl-CoA + CoA. It functions in the pathway lipid metabolism; fatty acid beta-oxidation. In terms of biological role, catalyzes the final step of fatty acid oxidation in which acetyl-CoA is released and the CoA ester of a fatty acid two carbons shorter is formed. The sequence is that of 3-ketoacyl-CoA thiolase from Shigella sonnei (strain Ss046).